The chain runs to 329 residues: UDP-N-acetylenolpyruvoylglucosamine reductase (329 aa).

The FAD-binding PCMH-type domain maps to 28–192 (RVGGPADLLC…ARVEVRLHAG (165 aa)). R172 is a catalytic residue. A disordered region spans residues 202–227 (REDRERRRATQPLDRPTFGSTFTNPP). S221 serves as the catalytic Proton donor. E291 is an active-site residue. The interval 307–329 (DGHAAAGGGPGAASGGVRPPEAT) is disordered. The span at 311 to 320 (AAGGGPGAAS) shows a compositional bias: gly residues.

The protein belongs to the MurB family. The cofactor is FAD.

Its subcellular location is the cytoplasm. The catalysed reaction is UDP-N-acetyl-alpha-D-muramate + NADP(+) = UDP-N-acetyl-3-O-(1-carboxyvinyl)-alpha-D-glucosamine + NADPH + H(+). The protein operates within cell wall biogenesis; peptidoglycan biosynthesis. In terms of biological role, cell wall formation. The chain is UDP-N-acetylenolpyruvoylglucosamine reductase from Anaeromyxobacter sp. (strain K).